The primary structure comprises 118 residues: Large ribosomal subunit protein bL19 (118 aa).

The protein belongs to the bacterial ribosomal protein bL19 family.

This protein is located at the 30S-50S ribosomal subunit interface and may play a role in the structure and function of the aminoacyl-tRNA binding site. This chain is Large ribosomal subunit protein bL19, found in Saccharophagus degradans (strain 2-40 / ATCC 43961 / DSM 17024).